We begin with the raw amino-acid sequence, 306 residues long: Probable dimethyladenosine transferase (306 aa).

The S-adenosyl-L-methionine site is built by histidine 30, leucine 32, glycine 57, glutamate 78, aspartate 106, and asparagine 121.

Belongs to the class I-like SAM-binding methyltransferase superfamily. rRNA adenine N(6)-methyltransferase family. In terms of assembly, part of the small subunit (SSU) processome, composed of more than 70 proteins and the RNA chaperone small nucleolar RNA (snoRNA) U3.

It localises to the nucleus. The protein resides in the nucleolus. The catalysed reaction is adenosine(1779)/adenosine(1780) in 18S rRNA + 4 S-adenosyl-L-methionine = N(6)-dimethyladenosine(1779)/N(6)-dimethyladenosine(1780) in 18S rRNA + 4 S-adenosyl-L-homocysteine + 4 H(+). In terms of biological role, specifically dimethylates two adjacent adenosines in the loop of a conserved hairpin near the 3'-end of 18S rRNA in the 40S particle. Involved in the pre-rRNA processing steps leading to small-subunit rRNA production independently of its RNA-modifying catalytic activity. Part of the small subunit (SSU) processome, first precursor of the small eukaryotic ribosomal subunit. During the assembly of the SSU processome in the nucleolus, many ribosome biogenesis factors, an RNA chaperone and ribosomal proteins associate with the nascent pre-rRNA and work in concert to generate RNA folding, modifications, rearrangements and cleavage as well as targeted degradation of pre-ribosomal RNA by the RNA exosome. This is Probable dimethyladenosine transferase from Drosophila melanogaster (Fruit fly).